A 150-amino-acid polypeptide reads, in one-letter code: D-aminoacyl-tRNA deacylase (150 aa).

Positions 138 to 139 match the Gly-cisPro motif, important for rejection of L-amino acids motif; the sequence is GP.

It belongs to the DTD family. Homodimer.

The protein resides in the cytoplasm. It catalyses the reaction glycyl-tRNA(Ala) + H2O = tRNA(Ala) + glycine + H(+). The enzyme catalyses a D-aminoacyl-tRNA + H2O = a tRNA + a D-alpha-amino acid + H(+). Its function is as follows. An aminoacyl-tRNA editing enzyme that deacylates mischarged D-aminoacyl-tRNAs. Also deacylates mischarged glycyl-tRNA(Ala), protecting cells against glycine mischarging by AlaRS. Acts via tRNA-based rather than protein-based catalysis; rejects L-amino acids rather than detecting D-amino acids in the active site. By recycling D-aminoacyl-tRNA to D-amino acids and free tRNA molecules, this enzyme counteracts the toxicity associated with the formation of D-aminoacyl-tRNA entities in vivo and helps enforce protein L-homochirality. This is D-aminoacyl-tRNA deacylase from Porphyromonas gingivalis (strain ATCC 33277 / DSM 20709 / CIP 103683 / JCM 12257 / NCTC 11834 / 2561).